The chain runs to 228 residues: Lipoprotein-releasing system ATP-binding protein LolD (228 aa).

In terms of domain architecture, ABC transporter spans 6-227 (LELLGIDRTY…LKDGKLIDYV (222 aa)). Residue 42–49 (GPSGSGKS) participates in ATP binding.

It belongs to the ABC transporter superfamily. Lipoprotein translocase (TC 3.A.1.125) family. The complex is composed of two ATP-binding proteins (LolD) and two transmembrane proteins (LolC and LolE).

It is found in the cell inner membrane. Functionally, part of the ABC transporter complex LolCDE involved in the translocation of mature outer membrane-directed lipoproteins, from the inner membrane to the periplasmic chaperone, LolA. Responsible for the formation of the LolA-lipoprotein complex in an ATP-dependent manner. This chain is Lipoprotein-releasing system ATP-binding protein LolD, found in Hyphomonas neptunium (strain ATCC 15444).